Here is an 861-residue protein sequence, read N- to C-terminus: Leucine--tRNA ligase (861 aa).

A 'HIGH' region motif is present at residues Pro-42–His-52. Positions Lys-619–Ser-623 match the 'KMSKS' region motif. Lys-622 serves as a coordination point for ATP.

It belongs to the class-I aminoacyl-tRNA synthetase family.

It localises to the cytoplasm. The catalysed reaction is tRNA(Leu) + L-leucine + ATP = L-leucyl-tRNA(Leu) + AMP + diphosphate. The polypeptide is Leucine--tRNA ligase (Haemophilus ducreyi (strain 35000HP / ATCC 700724)).